A 644-amino-acid polypeptide reads, in one-letter code: uncharacterized protein (644 aa).

Residues methionine 1 to glycine 39 are disordered. The Cytoplasmic portion of the chain corresponds to methionine 1–threonine 90. The span at aspartate 9–glutamate 26 shows a compositional bias: basic and acidic residues. Residues serine 22, serine 56, and serine 63 each carry the phosphoserine modification. The chain crosses the membrane as a helical span at residues isoleucine 91–phenylalanine 111. Over serine 112 to threonine 122 the chain is Vacuolar. The helical transmembrane segment at leucine 123–tyrosine 143 threads the bilayer. Topologically, residues serine 144–aspartate 147 are cytoplasmic. A helical membrane pass occupies residues tyrosine 148–isoleucine 168. Over lysine 169–arginine 174 the chain is Vacuolar. The chain crosses the membrane as a helical span at residues isoleucine 175–isoleucine 195. Residues leucine 196 to threonine 271 lie on the Cytoplasmic side of the membrane. Positions asparagine 225 to serine 251 are disordered. Polar residues predominate over residues glutamine 239 to serine 251. Serine 244 bears the Phosphoserine mark. Residues isoleucine 272–leucine 292 form a helical membrane-spanning segment. The Vacuolar portion of the chain corresponds to aspartate 293–aspartate 644. Positions proline 348–lysine 619 constitute an AB hydrolase-1 domain. The tract at residues glycine 469–threonine 492 is disordered.

It is found in the vacuole membrane. This is an uncharacterized protein from Saccharomyces cerevisiae (strain YJM789) (Baker's yeast).